The chain runs to 362 residues: 3-dehydroquinate synthase (362 aa).

NAD(+) contacts are provided by residues 74 to 79 (DGEEHK), 108 to 112 (GVTGD), 132 to 133 (TT), Lys145, and Lys154. 3 residues coordinate Zn(2+): Glu187, His250, and His267.

Belongs to the sugar phosphate cyclases superfamily. Dehydroquinate synthase family. Co(2+) is required as a cofactor. Zn(2+) serves as cofactor. It depends on NAD(+) as a cofactor.

It localises to the cytoplasm. It catalyses the reaction 7-phospho-2-dehydro-3-deoxy-D-arabino-heptonate = 3-dehydroquinate + phosphate. It participates in metabolic intermediate biosynthesis; chorismate biosynthesis; chorismate from D-erythrose 4-phosphate and phosphoenolpyruvate: step 2/7. Its function is as follows. Catalyzes the conversion of 3-deoxy-D-arabino-heptulosonate 7-phosphate (DAHP) to dehydroquinate (DHQ). In Syntrophotalea carbinolica (strain DSM 2380 / NBRC 103641 / GraBd1) (Pelobacter carbinolicus), this protein is 3-dehydroquinate synthase.